A 597-amino-acid polypeptide reads, in one-letter code: MSSPTSVEEDGDIKLKTRFHGQVVVLYARPPLILDDFFALLRDACKQHAKQDITVKWIDEDGDPISIDSQMELDEAVRCLNVSQEAELNIHVFVGKPELPGLPCQGEDKTVYRRGARRWKKIYLYNGHRFQGKRLNRRIQCFICHDYIWGIGRQGFRCVDCRLCVHKKCHRHVRTHCGQTPQGPNVPVAPSSGVGSLRGGRLDTSSSTTRSGGGIDNGAFHEHEIESPGSAKDMSRSTNGNGASKWAVSLNDFRLLTVIGRGSYAKVVQAEHIATRQIYAIKIIKKEMFNEDEDIDWVQTEKSVFEAASNYPFLVGLHSCFQTESRLFFVIEFVPGGDLMFHMQQQRRLPEEHARFYSGEIILALHFLHSRGIIYRDLKLDNVLIDAEGHIKLTDYGMCKENINAGDLTSTFCGTPNYIAPEILRGDEYGFSVDWWALGVLMFEMMAGRSPFDIVGMQNSEENTEDYLFQIILERQIRIPRSLSVRASNILKGFLNKDPSQRLGCKLDINDGLNDMKEHDFFRGFIDWEALEQKAVAPPYHPAVESDRDLTHFDHQFTDEPPQLSPDNSAVIARIDQSEFDGFEYVNPLQMSREDSV.

The region spanning 12-95 (DIKLKTRFHG…AELNIHVFVG (84 aa)) is the PB1 domain. The Phorbol-ester/DAG-type zinc finger occupies 127–177 (GHRFQGKRLNRRIQCFICHDYIWGIGRQGFRCVDCRLCVHKKCHRHVRTHC). A disordered region spans residues 181-238 (PQGPNVPVAPSSGVGSLRGGRLDTSSSTTRSGGGIDNGAFHEHEIESPGSAKDMSRST). A Protein kinase domain is found at 253–522 (FRLLTVIGRG…LNDMKEHDFF (270 aa)). Residues 259-267 (IGRGSYAKV) and lysine 282 each bind ATP. The active-site Proton acceptor is aspartate 377. The AGC-kinase C-terminal domain maps to 524–595 (GFIDWEALEQ…VNPLQMSRED (72 aa)).

Belongs to the protein kinase superfamily. AGC Ser/Thr protein kinase family. PKC subfamily. In terms of assembly, interaction with par-3 required for the peripheral localization of par-6 and to form a par-3/par-6/pkc-3 complex, which is activated when cdc-42 interacts with par-6. Binds avidly to the phosphotyrosine interaction domain (PID) of a novel pkc-3 adapter protein num-1, which enables tethering and targeting of pkc-3 to the cell periphery. Mg(2+) serves as cofactor.

Its subcellular location is the cytoplasm. The protein resides in the cytoskeleton. It catalyses the reaction L-seryl-[protein] + ATP = O-phospho-L-seryl-[protein] + ADP + H(+). The catalysed reaction is L-threonyl-[protein] + ATP = O-phospho-L-threonyl-[protein] + ADP + H(+). In terms of biological role, required for the normal progression of embryogenesis and viability of the organism. Plays an indispensable role in establishing embryonic polarity and in recruiting and maintaining par-6 to the periphery, through interaction with par-3. Required for epithelial cell polarity in the distal spermatheca. Phosphorylates serine residues of num-1. Required for the expression of antimicrobial peptide nlp-29 in response in response to fungal infection or physical injury. The protein is Protein kinase C-like 3 of Caenorhabditis briggsae.